The chain runs to 361 residues: Cyclin-D3-3 (361 aa).

Belongs to the cyclin family. Cyclin D subfamily.

Its function is as follows. Promotes divisions in the guard cells (GCs) after the guard mother cells (GMC) symmetric division. In Arabidopsis thaliana (Mouse-ear cress), this protein is Cyclin-D3-3 (CYCD3-3).